Here is a 745-residue protein sequence, read N- to C-terminus: UPF0508 protein YJR030C (745 aa).

Belongs to the UPF0508 family.

The sequence is that of UPF0508 protein YJR030C from Saccharomyces cerevisiae (strain ATCC 204508 / S288c) (Baker's yeast).